The primary structure comprises 307 residues: Ribonuclease HIII (307 aa).

The RNase H type-2 domain maps to 93 to 307; the sequence is MSVIGSDEVG…ANTQKAKKWL (215 aa). A divalent metal cation-binding residues include aspartate 99, glutamate 100, and aspartate 204.

Belongs to the RNase HII family. RnhC subfamily. Requires Mn(2+) as cofactor. It depends on Mg(2+) as a cofactor.

It localises to the cytoplasm. It carries out the reaction Endonucleolytic cleavage to 5'-phosphomonoester.. Its function is as follows. Endonuclease that specifically degrades the RNA of RNA-DNA hybrids. The chain is Ribonuclease HIII from Bacillus pumilus (strain SAFR-032).